Consider the following 338-residue polypeptide: MTVATSASTAVPSDSRQRVATFLKDLQDQICQGLEAADGGAQFQEDTWQRPEGGGGRSRVMKNGQLLEQGGVNFSEVWGEQLPPSILAQRPEAAGYGFYATGTSMVLHPRNPYVPTVHLNYRYFEAGPVWWFGGGADLTPYYPFAEDAKHFHQVHQAACDRHHREYYPVFKRWCDEYFYLKHRGETRGVGGIFFDYQDGSDRELYRGPNPDGEAARYSQRVGSIGSRSWEDLFAFIQSCGQAFLEAYLPIVERRRHLTYGDRERQFQLYRRGRYVEFNLVYDRGTIFGLQTNGRTESILMSLPPLVRWEYGYTPEPNSREAELYSTFLKPQDWVNWPV.

S104 contacts substrate. The a divalent metal cation site is built by H108 and H118. H118 (proton donor) is an active-site residue. 120–122 (NYR) contacts substrate. Residues H152 and H182 each coordinate a divalent metal cation. The interval 274–309 (YVEFNLVYDRGTIFGLQTNGRTESILMSLPPLVRWE) is important for dimerization.

This sequence belongs to the aerobic coproporphyrinogen-III oxidase family. As to quaternary structure, homodimer. It depends on a divalent metal cation as a cofactor.

The protein resides in the cytoplasm. It catalyses the reaction coproporphyrinogen III + O2 + 2 H(+) = protoporphyrinogen IX + 2 CO2 + 2 H2O. Its pathway is porphyrin-containing compound metabolism; protoporphyrin-IX biosynthesis; protoporphyrinogen-IX from coproporphyrinogen-III (O2 route): step 1/1. Its function is as follows. Involved in the heme and chlorophyll biosynthesis. Catalyzes the aerobic oxidative decarboxylation of propionate groups of rings A and B of coproporphyrinogen-III to yield the vinyl groups in protoporphyrinogen-IX. The polypeptide is Oxygen-dependent coproporphyrinogen-III oxidase (Thermosynechococcus vestitus (strain NIES-2133 / IAM M-273 / BP-1)).